The sequence spans 75 residues: ATP synthase subunit c (75 aa).

The next 2 helical transmembrane spans lie at 8 to 28 (FIAIGLAVFGMLGAGLGIANI) and 52 to 72 (IGAAMVEIMGLLAFVLAMLLI).

The protein belongs to the ATPase C chain family. F-type ATPases have 2 components, F(1) - the catalytic core - and F(0) - the membrane proton channel. F(1) has five subunits: alpha(3), beta(3), gamma(1), delta(1), epsilon(1). F(0) has three main subunits: a(1), b(2) and c(10-14). The alpha and beta chains form an alternating ring which encloses part of the gamma chain. F(1) is attached to F(0) by a central stalk formed by the gamma and epsilon chains, while a peripheral stalk is formed by the delta and b chains.

It is found in the cell membrane. F(1)F(0) ATP synthase produces ATP from ADP in the presence of a proton or sodium gradient. F-type ATPases consist of two structural domains, F(1) containing the extramembraneous catalytic core and F(0) containing the membrane proton channel, linked together by a central stalk and a peripheral stalk. During catalysis, ATP synthesis in the catalytic domain of F(1) is coupled via a rotary mechanism of the central stalk subunits to proton translocation. Functionally, key component of the F(0) channel; it plays a direct role in translocation across the membrane. A homomeric c-ring of between 10-14 subunits forms the central stalk rotor element with the F(1) delta and epsilon subunits. The chain is ATP synthase subunit c from Wolbachia pipientis wMel.